Consider the following 682-residue polypeptide: Connectin (682 aa).

A signal peptide spans 1–24; the sequence is MATLADSAICFLLLSLLLIGACLV. Residues 29 to 54 form a disordered region; that stretch reads GRAKDDRRTRGRGSSSGVLSSSSSSS. The segment covering 40-54 has biased composition (low complexity); that stretch reads RGSSSGVLSSSSSSS. LRR repeat units lie at residues 149–172, 173–196, 199–220, 223–244, 247–268, 271–292, 295–316, 319–342, 343–364, 367–388, and 389–404; these read LRELKFVIQNNARLDYIPTMIIEP, LKNLSSIVIEYSQVEIVKSYAFAN, FLERIILNNNHIMALDQDAFAN, RLRELNLEHNQIFEMDRYAFRN, LCERLFLNNNNISTLHEGLFAD, RLTFLNLAHNQINVLTSEIFRG, NLNVLKLTRNNLNFIGDTVFAE, SLSELELDDNRIERISERALDGLN, TLKTLNLRNNLLKKIDNGLLRG, ALLSINVQANKLETLTFYTFQP, and IMDNLVNSTSELLVSD. One can recognise an LRRCT domain in the interval 405-462; the sequence is NKFICDCRLQWIFELKNRTRHLQLRDSLEDLHCTLQEPKLSHFVDPVPPTILDVLNIG. The interval 503–536 is disordered; that stretch reads RQALRGQRQFASSAENVVESKMRRRRKRQEEVKE. Alanine 658 is lipidated: GPI-anchor amidated alanine. A propeptide spans 659–682 (removed in mature form); it reads GANSLAQGMTIIVSLVALMMISRG.

In terms of tissue distribution, predominantly expressed in abdominal and thoracic segment muscle and motorneuron cells.

It is found in the cell membrane. In terms of biological role, cell adhesion protein involved in target recognition during neuromuscular development. Mediates homophilic cellular adhesion. This is Connectin (Con) from Drosophila melanogaster (Fruit fly).